The sequence spans 520 residues: Nonsense-mediated mRNA decay factor SMG9 (520 aa).

A disordered region spans residues Met-1 to Thr-143. At Ser-2 the chain carries N-acetylserine. Phosphoserine is present on residues Ser-2, Ser-4, Ser-7, Ser-32, and Ser-53. Basic and acidic residues predominate over residues Gly-36–Ser-53. Pro residues-rich tracts occupy residues Gln-78–Leu-94 and Thr-122–Pro-133. Residue Ser-451 is modified to Phosphoserine.

This sequence belongs to the SMG9 family. Self-associates to form homodimers and forms heterodimers with SMG8; these assembly forms may represent SMG1C intermediate forms. Component of the SMG1C complex composed of SMG1, SMG8 and SMG9. Interacts with DHX34; the interaction is RNA-independent. In terms of processing, phosphorylated by SMG1.

Its function is as follows. Involved in nonsense-mediated decay (NMD) of mRNAs containing premature stop codons. Is recruited by release factors to stalled ribosomes together with SMG1 and SMG8 (forming the SMG1C protein kinase complex) and, in the SMG1C complex, is required for the efficient association between SMG1 and SMG8. Plays a role in brain, heart, and eye development. The polypeptide is Nonsense-mediated mRNA decay factor SMG9 (Mus musculus (Mouse)).